The sequence spans 199 residues: Shikimate kinase (199 aa).

12–17 lines the ATP pocket; that stretch reads GAGKST. Ser-16 contributes to the Mg(2+) binding site. Residues Asp-34, Arg-58, and Gly-80 each coordinate substrate. Residue Arg-117 participates in ATP binding. Arg-136 is a binding site for substrate. A disordered region spans residues 174–199; that stretch reads VSGGDRKSSEAERSGAPLRKSSEVVK. The span at 177–186 shows a compositional bias: basic and acidic residues; the sequence is GDRKSSEAER.

This sequence belongs to the shikimate kinase family. In terms of assembly, monomer. Requires Mg(2+) as cofactor.

The protein resides in the cytoplasm. It carries out the reaction shikimate + ATP = 3-phosphoshikimate + ADP + H(+). It functions in the pathway metabolic intermediate biosynthesis; chorismate biosynthesis; chorismate from D-erythrose 4-phosphate and phosphoenolpyruvate: step 5/7. Functionally, catalyzes the specific phosphorylation of the 3-hydroxyl group of shikimic acid using ATP as a cosubstrate. This Mycobacterium leprae (strain TN) protein is Shikimate kinase.